The primary structure comprises 278 residues: Sulfur carrier protein FdhD (278 aa).

C117 functions as the Cysteine persulfide intermediate in the catalytic mechanism.

It belongs to the FdhD family.

Its subcellular location is the cytoplasm. Functionally, required for formate dehydrogenase (FDH) activity. Acts as a sulfur carrier protein that transfers sulfur from IscS to the molybdenum cofactor prior to its insertion into FDH. The polypeptide is Sulfur carrier protein FdhD (Variovorax paradoxus (strain S110)).